The following is a 1064-amino-acid chain: Lysine-specific demethylase 4A (1064 aa).

A2 is modified (N-acetylalanine). In terms of domain architecture, JmjN spans 14–56; the sequence is IMTFYPTMEEFRNFSRYIAYIESQGAHRAGLAKVVPPKEWKPR. Y132 is a binding site for 2-oxoglutarate. Positions 142 to 308 constitute a JmjC domain; the sequence is EKHVDEWNIG…YGKQAVLCSC (167 aa). H188 and E190 together coordinate Fe cation. 2-oxoglutarate is bound by residues N198 and K206. C234 and H240 together coordinate Zn(2+). Residue K241 coordinates 2-oxoglutarate. H276 contacts Fe cation. Positions 306 and 308 each coordinate Zn(2+). Residues 358 to 384 form a disordered region; that stretch reads ELPPRAGNEEECPEEDMEGVEDGEEGD. Residues 366-382 are compositionally biased toward acidic residues; that stretch reads EEECPEEDMEGVEDGEE. K471 is covalently cross-linked ((Microbial infection) Glycyl lysine isopeptide (Lys-Gly) (interchain with G-Cter in SUMO)). Disordered regions lie at residues 501–537 and 616–641; these read FSGS…RAQG and SDDE…KPLS. The segment covering 509 to 532 has biased composition (low complexity); that stretch reads SSSLGSGSSRDSISSDSETSEPLS. The residue at position 523 (S523) is a Phosphoserine. Positions 597-638 are interaction with NCOR1; it reads RQPLSKLPRHHPLVLQECVSDDETSEQLTPEEEAEETEAWAK. The segment covering 616-634 has biased composition (acidic residues); that stretch reads SDDETSEQLTPEEEAEETE. The PHD-type 1 zinc-finger motif lies at 709-767; it reads MCFTSTGCSTDINLSTPYLEEDGTSILVSCKKCSVRVHASCYGVPPAKASEDWMCSRCS. The segment at 772–805 adopts a C2HC pre-PHD-type zinc-finger fold; the sequence is EEDCCLCSLRGGALQRANDDRWVHVSCAVAILEA. The PHD-type 2 zinc finger occupies 828 to 885; it reads LKCIFCKKRRKRTAGCCVQCSHGRCPTAFHVSCAQAAGVMMQPDDWPFVVFITCFRHK. Tudor domains are found at residues 897-954 and 955-1011; these read QSIT…CLQF and GPPA…EELP.

It belongs to the JHDM3 histone demethylase family. In terms of assembly, interacts with histone deacetylase proteins HDAC1, HDAC2 and HDAC3. Interacts with RB and NCOR1. Interacts with VRK1. Interacts with FBXO22; this interaction promotes KDM4A ubiquitination. (Microbial infection) Interacts with HTLV-1 Tax protein. Requires Fe(2+) as cofactor. Post-translationally, (Microbial infection) SUMOylated by human herpesvirus 8 E3 SUMO-protein ligase K-bZIP/K8 at Lys-471; thereby modulating the chromatin binding and histone demethylase activity of KDM4A. In terms of processing, ubiquitinated by RNF8 and RNF168 following DNA damage, leading to its degradation. Degradation promotes accessibility of H4K20me2 mark for DNA repair protein TP53BP1, which is then recruited. Also ubiquitinated by the SCF(FBXO22) complex; leading to proteasomal degradation. As to expression, ubiquitous.

The protein localises to the nucleus. The enzyme catalyses N(6),N(6),N(6)-trimethyl-L-lysyl(9)-[histone H3] + 2 2-oxoglutarate + 2 O2 = N(6)-methyl-L-lysyl(9)-[histone H3] + 2 formaldehyde + 2 succinate + 2 CO2. It carries out the reaction N(6),N(6),N(6)-trimethyl-L-lysyl(36)-[histone H3] + 2 2-oxoglutarate + 2 O2 = N(6)-methyl-L-lysyl(36)-[histone H3] + 2 formaldehyde + 2 succinate + 2 CO2. Its activity is regulated as follows. Several specific inhibitors are being developed and tested. In terms of biological role, histone demethylase that specifically demethylates 'Lys-9' and 'Lys-36' residues of histone H3, thereby playing a central role in histone code. Does not demethylate histone H3 'Lys-4', H3 'Lys-27' nor H4 'Lys-20'. Demethylates trimethylated H3 'Lys-9' and H3 'Lys-36' residue, while it has no activity on mono- and dimethylated residues. Demethylation of Lys residue generates formaldehyde and succinate. Participates in transcriptional repression of ASCL2 and E2F-responsive promoters via the recruitment of histone deacetylases and NCOR1, respectively. Crucial for muscle differentiation, promotes transcriptional activation of the Myog gene by directing the removal of repressive chromatin marks at its promoter. Lacks the N-terminal demethylase domain. This chain is Lysine-specific demethylase 4A (KDM4A), found in Homo sapiens (Human).